A 180-amino-acid polypeptide reads, in one-letter code: Endothelin-2 (180 aa).

The N-terminal stretch at 1–26 (MVALPTAWCSVALALLVALHEGKSQS) is a signal peptide. Residues 27–47 (AATSEEPPAPSARARGSHLRL) constitute a propeptide that is removed on maturation. 2 cysteine pairs are disulfide-bonded: Cys50/Cys64 and Cys52/Cys60. A propeptide spanning residues 71-180 (VNTPGQTAPY…ESSHSRWRKR (110 aa)) is cleaved from the precursor. Residues 97–112 (CECYSTRDSACVTFCH) are endothelin-like. The tract at residues 157–180 (NFTRHQQQKATREPESSHSRWRKR) is disordered.

This sequence belongs to the endothelin/sarafotoxin family.

The protein localises to the secreted. Endothelins are endothelium-derived vasoconstrictor peptides. The polypeptide is Endothelin-2 (EDN2) (Atelerix albiventris (Middle-African hedgehog)).